Reading from the N-terminus, the 159-residue chain is uncharacterized protein (159 aa).

This is an uncharacterized protein from Acanthamoeba polyphaga (Amoeba).